A 337-amino-acid polypeptide reads, in one-letter code: Phenylpyruvate C(3)-methyltransferase (337 aa).

This sequence belongs to the methyltransferase superfamily.

The enzyme catalyses 3-phenylpyruvate + S-adenosyl-L-methionine = (3S)-2-oxo-3-phenylbutanoate + S-adenosyl-L-homocysteine + H(+). Its pathway is antibiotic biosynthesis. In terms of biological role, S-adenosyl-L-methionine-dependent methyltransferase involved in synthesis of the nonproteinogenic amino acid (2S,3S)-beta-methyl-phenylalanine, a building block of the antibiotic mannopeptimycin. The polypeptide is Phenylpyruvate C(3)-methyltransferase (mppJ) (Streptomyces hygroscopicus).